The sequence spans 349 residues: Protein BCCIP homolog (349 aa).

Positions 1-10 are enriched in basic residues; the sequence is MGRVFKKKGG. The tract at residues 1–65 is disordered; it reads MGRVFKKKGG…DDEEEDEDEQ (65 aa). The segment covering 11 to 33 has biased composition (basic and acidic residues); the sequence is AKREAEEEKQEELVMRKKLRKEE. Acidic residues predominate over residues 34 to 65; the sequence is EPEPVEDVEEDEDVSDEDDEDIDDEEEDEDEQ.

It belongs to the BCP1 family.

In Caenorhabditis elegans, this protein is Protein BCCIP homolog.